Consider the following 461-residue polypeptide: Signal recognition particle receptor FtsY (461 aa).

One copy of the TPR repeat lies at 105–138 (FESLYNVAKIYHQLEKPDKALEYAQRAEKLVPYE). Residues 267-274 (GVNGSGKT), 349-353 (DTAGR), and 413-416 (TKLD) contribute to the GTP site.

This sequence belongs to the GTP-binding SRP family. FtsY subfamily. In terms of assembly, part of the signal recognition particle protein translocation system, which is composed of SRP and FtsY.

The protein resides in the cell inner membrane. It localises to the cytoplasm. The enzyme catalyses GTP + H2O = GDP + phosphate + H(+). Functionally, involved in targeting and insertion of nascent membrane proteins into the cytoplasmic membrane. Acts as a receptor for the complex formed by the signal recognition particle (SRP) and the ribosome-nascent chain (RNC). The sequence is that of Signal recognition particle receptor FtsY from Aquifex aeolicus (strain VF5).